The sequence spans 339 residues: Thermospermine synthase ACAULIS5 (339 aa).

The 238-residue stretch at 33–270 (CHWYEETIDD…DTWGWVMASD (238 aa)) folds into the PABS domain. Residues Q62, E117, D137, and 168–169 (DA) contribute to the S-adenosyl 3-(methylsulfanyl)propylamine site. The active-site Proton acceptor is D186.

Belongs to the spermidine/spermine synthase family. As to expression, highly expressed in stem internodes and roots. Lower levels in young seedlings before flowering and rosette leaves. Expressed in the vascular tissues. Restricted to procambial and/or provascular cells during primary root development and early leaves development.

It carries out the reaction S-adenosyl 3-(methylsulfanyl)propylamine + spermidine = thermospermine + S-methyl-5'-thioadenosine + H(+). Its function is as follows. Required for correct xylem specification through regulation of the lifetime of the xylem elements. Prevents premature death of the xylem vessel elements. This chain is Thermospermine synthase ACAULIS5 (ACL5), found in Arabidopsis thaliana (Mouse-ear cress).